The primary structure comprises 286 residues: Cytochrome c oxidase subunit 3 (286 aa).

8 consecutive transmembrane segments (helical) span residues Gly13 to Ile33, Val40 to Ile60, Ile85 to Phe105, Ile133 to Leu153, Leu173 to Ile195, Val199 to Ile221, Thr223 to Ile243, and Ile253 to Leu273.

It belongs to the cytochrome c oxidase subunit 3 family. Component of the cytochrome c oxidase (complex IV, CIV), a multisubunit enzyme composed of a catalytic core of 3 subunits and several supernumerary subunits. The complex exists as a monomer or a dimer and forms supercomplexes (SCs) in the inner mitochondrial membrane with ubiquinol-cytochrome c oxidoreductase (cytochrome b-c1 complex, complex III, CIII).

It localises to the mitochondrion inner membrane. It catalyses the reaction 4 Fe(II)-[cytochrome c] + O2 + 8 H(+)(in) = 4 Fe(III)-[cytochrome c] + 2 H2O + 4 H(+)(out). Its function is as follows. Component of the cytochrome c oxidase, the last enzyme in the mitochondrial electron transport chain which drives oxidative phosphorylation. The respiratory chain contains 3 multisubunit complexes succinate dehydrogenase (complex II, CII), ubiquinol-cytochrome c oxidoreductase (cytochrome b-c1 complex, complex III, CIII) and cytochrome c oxidase (complex IV, CIV), that cooperate to transfer electrons derived from NADH and succinate to molecular oxygen, creating an electrochemical gradient over the inner membrane that drives transmembrane transport and the ATP synthase. Cytochrome c oxidase is the component of the respiratory chain that catalyzes the reduction of oxygen to water. Electrons originating from reduced cytochrome c in the intermembrane space (IMS) are transferred via the dinuclear copper A center (CU(A)) of subunit 2 and heme A of subunit 1 to the active site in subunit 1, a binuclear center (BNC) formed by heme A3 and copper B (CU(B)). The BNC reduces molecular oxygen to 2 water molecules using 4 electrons from cytochrome c in the IMS and 4 protons from the mitochondrial matrix. In Trypanoplasma borreli, this protein is Cytochrome c oxidase subunit 3 (COIII).